We begin with the raw amino-acid sequence, 118 residues long: Large ribosomal subunit protein bL20 (118 aa).

Belongs to the bacterial ribosomal protein bL20 family.

Binds directly to 23S ribosomal RNA and is necessary for the in vitro assembly process of the 50S ribosomal subunit. It is not involved in the protein synthesizing functions of that subunit. In Psychrobacter sp. (strain PRwf-1), this protein is Large ribosomal subunit protein bL20.